The sequence spans 486 residues: UDP-N-acetylglucosamine pyrophosphorylase (486 aa).

The Substrate binding motif lies at Met109–Gly112. UTP is bound by residues Met109 to Gly112, Lys123, Gln199, and Gly226. Asn227 is a substrate binding site. Residue Asp257 participates in UTP binding. Positions Glu309–Tyr310 match the Substrate binding motif. Residue Lys389 participates in UTP binding. A substrate-binding site is contributed by Lys421.

Belongs to the UDPGP type 1 family.

It is found in the cytoplasm. The enzyme catalyses N-acetyl-alpha-D-glucosamine 1-phosphate + UTP + H(+) = UDP-N-acetyl-alpha-D-glucosamine + diphosphate. The protein operates within nucleotide-sugar biosynthesis; UDP-N-acetyl-alpha-D-glucosamine biosynthesis; UDP-N-acetyl-alpha-D-glucosamine from N-acetyl-alpha-D-glucosamine 1-phosphate: step 1/1. The sequence is that of UDP-N-acetylglucosamine pyrophosphorylase (UAP1) from Candida albicans (Yeast).